Consider the following 162-residue polypeptide: Putative ankyrin repeat protein RBE_0151 (162 aa).

ANK repeat units follow at residues Glu-49–Ile-77, Lys-81–Pro-110, and Tyr-114–Lys-145.

The protein is Putative ankyrin repeat protein RBE_0151 of Rickettsia bellii (strain RML369-C).